The primary structure comprises 244 residues: rRNA adenine N-6-methyltransferase (244 aa).

Residues Asn11, Ile13, Gly38, Glu59, Asp84, and Ser101 each contribute to the S-adenosyl-L-methionine site.

Belongs to the class I-like SAM-binding methyltransferase superfamily. rRNA adenine N(6)-methyltransferase family.

Functionally, involved in erythromycin resistance. This Lysinibacillus sphaericus (Bacillus sphaericus) protein is rRNA adenine N-6-methyltransferase (ermG).